The chain runs to 318 residues: Methionyl-tRNA formyltransferase (318 aa).

110-113 is a binding site for (6S)-5,6,7,8-tetrahydrofolate; it reads SLLP.

Belongs to the Fmt family.

The enzyme catalyses L-methionyl-tRNA(fMet) + (6R)-10-formyltetrahydrofolate = N-formyl-L-methionyl-tRNA(fMet) + (6S)-5,6,7,8-tetrahydrofolate + H(+). Its function is as follows. Attaches a formyl group to the free amino group of methionyl-tRNA(fMet). The formyl group appears to play a dual role in the initiator identity of N-formylmethionyl-tRNA by promoting its recognition by IF2 and preventing the misappropriation of this tRNA by the elongation apparatus. This is Methionyl-tRNA formyltransferase from Lacticaseibacillus paracasei (strain ATCC 334 / BCRC 17002 / CCUG 31169 / CIP 107868 / KCTC 3260 / NRRL B-441) (Lactobacillus paracasei).